Here is a 236-residue protein sequence, read N- to C-terminus: C-&gt;U-editing enzyme APOBEC-1 (236 aa).

The CMP/dCMP-type deaminase domain maps to 10–134; sequence GDPTLRRRIE…QRNRQGLRDL (125 aa). His61 is a Zn(2+) binding site. The Proton donor role is filled by Glu63. Positions 93 and 96 each coordinate Zn(2+).

It belongs to the cytidine and deoxycytidylate deaminase family. Homodimer. Interacts with A1CF; form an mRNA editing complex. Interacts with RBM47; form an mRNA editing complex. Found in a complex with CELF2/CUGBP2 and A1CF. Interacts with HNRPAB. Interacts with SYNCRIP. Zn(2+) serves as cofactor.

It localises to the cytoplasm. It is found in the nucleus. The enzyme catalyses a cytidine in mRNA + H2O + H(+) = a uridine in mRNA + NH4(+). The catalysed reaction is cytidine(6666) in apoB mRNA + H2O + H(+) = uridine(6666) in apoB mRNA + NH4(+). Cytidine deaminase catalyzing the cytidine to uridine postranscriptional editing of a variety of mRNAs. Form complexes with cofactors that confer differential editing activity and selectivity. Responsible for the postranscriptional editing of a CAA codon for Gln to a UAA codon for stop in the apolipoprotein B mRNA. Also involved in CGA (Arg) to UGA (Stop) editing in the NF1 mRNA. May also play a role in the epigenetic regulation of gene expression by participating in DNA demethylation. The chain is C-&gt;U-editing enzyme APOBEC-1 from Pongo pygmaeus (Bornean orangutan).